We begin with the raw amino-acid sequence, 144 residues long: Globin-1 (144 aa).

The Globin domain maps to 1 to 141 (VSANDIKNVQ…ILHQMSSYFA (141 aa)). Residue H89 participates in heme b binding.

Belongs to the globin family. In terms of assembly, homodimer.

The protein is Globin-1 of Phreagena soyoae (Deep-sea cold-seep clam).